The following is a 140-amino-acid chain: 3-hydroxyacyl-[acyl-carrier-protein] dehydratase FabZ (140 aa).

Residue His47 is part of the active site.

Belongs to the thioester dehydratase family. FabZ subfamily.

The protein localises to the cytoplasm. It carries out the reaction a (3R)-hydroxyacyl-[ACP] = a (2E)-enoyl-[ACP] + H2O. In terms of biological role, involved in unsaturated fatty acids biosynthesis. Catalyzes the dehydration of short chain beta-hydroxyacyl-ACPs and long chain saturated and unsaturated beta-hydroxyacyl-ACPs. The chain is 3-hydroxyacyl-[acyl-carrier-protein] dehydratase FabZ from Streptococcus pneumoniae (strain 70585).